The primary structure comprises 572 residues: MPKFDVSKADLERLVGKSFTVEEWEDLFLYAKCELDDVWEENGQIYFKADSKDTNRPDLWSAEGIARQIRWALGMAKGLPRYEVEKSDVVVYVDEKLKDIRPYGVYAIVEGLSLDDEALKQMINLQEKVALTFGRRRREVAIGIFDFDKVKPPIYYRAAEKTEKFVPLGFEEKMSLEEILEKHEKGKEYGHLIKDKPYYPLLVDSEGNVLSMPPIINSELTGRVTTETRNVFVDVTGWDLNKIMLALNVVVTALAERGGKIKSVKVVYGDFEIETPNLTPKEFEVEFEYIRRLAGIDLSDEEIKELLERMFYEVELENGKAKLKYPAFRDDIMHARDVLEDVLIAYGYNEIKPEEPKLAVQGRGDKFVEFEDTVRELMVGYGLQEVMTFNLTNREAQYTKMNLDFGEHPFEEYGHHPPARLVEIENPISPKWSALRAWLIPSLMEFLSQNTHEEYPQRIFEVGKTTLINENKETKTVSESKLAVAIAHPRVTFTEVKEILDSVMHHLGLEYELKEIEHNSFIPGRVGKIIVNGQEVGIIGEIHPKVLENWGIEMPVAAFEVFLRPLYREPYL.

A B5 domain is found at 278–353 (LTPKEFEVEF…IAYGYNEIKP (76 aa)). Mg(2+) is bound by residues aspartate 331, aspartate 337, glutamate 340, and aspartate 341.

The protein belongs to the phenylalanyl-tRNA synthetase beta subunit family. Type 2 subfamily. As to quaternary structure, tetramer of two alpha and two beta subunits. Mg(2+) is required as a cofactor.

Its subcellular location is the cytoplasm. It carries out the reaction tRNA(Phe) + L-phenylalanine + ATP = L-phenylalanyl-tRNA(Phe) + AMP + diphosphate + H(+). The sequence is that of Phenylalanine--tRNA ligase beta subunit from Thermococcus onnurineus (strain NA1).